The following is a 257-amino-acid chain: Meiotically up-regulated gene 14 protein (257 aa).

The protein resides in the cytoplasm. It is found in the nucleus. Its function is as follows. Has a role in meiosis. In Schizosaccharomyces pombe (strain 972 / ATCC 24843) (Fission yeast), this protein is Meiotically up-regulated gene 14 protein (mug14).